The following is a 288-amino-acid chain: T-lymphocyte activation antigen CD80 (288 aa).

Positions 1–34 are cleaved as a signal peptide; the sequence is MGHTRRQGTSPSKCPYLNFFQLLVLAGLSHFCSG. Residues 35-135 enclose the Ig-like V-type domain; that stretch reads VIHVTKEVKE…FKREHLAEVT (101 aa). Topologically, residues 35-242 are extracellular; that stretch reads VIHVTKEVKE…TTKQEHFPDN (208 aa). Cystine bridges form between C50-C116 and C162-C216. Residues N53, N89, N98, N186, N207, N211, N226, and N232 are each glycosylated (N-linked (GlcNAc...) asparagine). The Ig-like C2-type domain occupies 145–230; sequence PSISDFEIPT…GHLRVNQTFN (86 aa). Residues 243–263 traverse the membrane as a helical segment; the sequence is LLPSWAITLISVNGIFVICCL. Residues C261, C262, C266, and C271 are each lipidated (S-palmitoyl cysteine). Topologically, residues 264 to 288 are cytoplasmic; that stretch reads TYCFAPRCRERRRNERLRRESVRPV. At S284 the chain carries Phosphoserine.

Homodimer. Interacts with CTLA4; this interaction inhibits T-cell activation. Interacts with PDL1/CD274; this interaction blocks PDL1/PDCD1 binding and thus PDL1/CD274 inhibitory function. Interacts with CD28. As to quaternary structure, (Microbial infection) Interacts with adenovirus subgroup B fiber proteins. In terms of assembly, (Microbial infection) Interacts with Orthopoxvirus OPG038/M2 protein, inhibiting the interaction with CTLA4/CD152. In terms of processing, palmitoylated by ZDHHC20; palmitoylation protects CD80 from ubiquitin-mediated degradation, regulating the protein stability, and ensures its accurate plasma membrane localization. Expressed on activated B-cells, macrophages and dendritic cells.

Its subcellular location is the cell membrane. In terms of biological role, costimulatory molecule that belongs to the immunoglobulin superfamily that plays an important role in T-lymphocyte activation. Acts as the primary auxiliary signal augmenting the MHC/TCR signal in naive T-cells together with the CD28 receptor which is constitutively expressed on the cell surface of T-cells. In turn, activates different signaling pathways such as NF-kappa-B or MAPK leading to the production of different cytokines. In addition, CD28/CD80 costimulatory signal stimulates glucose metabolism and ATP synthesis of T-cells by activating the PI3K/Akt signaling pathway. Also acts as a regulator of PDL1/PDCD1 interactions to limit excess engagement of PDL1 and its inhibitory role in immune responses. Expressed on B-cells, plays a critical role in regulating interactions between B-cells and T-cells in both early and late germinal center responses, which are crucial for the generation of effective humoral immune responses. Its function is as follows. (Microbial infection) Acts as a receptor for adenovirus subgroup B. The sequence is that of T-lymphocyte activation antigen CD80 (CD80) from Homo sapiens (Human).